Here is a 260-residue protein sequence, read N- to C-terminus: 14-3-3-like protein GF14-F (260 aa).

The interval 241 to 260 (NAEDGGDEIKEAAKPEGEGH) is disordered. Residues 247–260 (DEIKEAAKPEGEGH) are compositionally biased toward basic and acidic residues.

Belongs to the 14-3-3 family. As to quaternary structure, may form a complex with the transcriptional activator VP1 and the bZIP transcription factor EMBP1. As to expression, expressed in seedlings, roots and panicles and at lower levels in flag leaves and internodes.

It localises to the cytoplasm. Its subcellular location is the nucleus. Its function is as follows. Is associated with a DNA binding complex that binds to the G box, a well-characterized cis-acting DNA regulatory element found in plant genes. In Oryza sativa subsp. japonica (Rice), this protein is 14-3-3-like protein GF14-F (GF14F).